The chain runs to 449 residues: tRNA-2-methylthio-N(6)-dimethylallyladenosine synthase (449 aa).

The MTTase N-terminal domain maps to 3-124 (KMLYIKTYGC…LPTMLEKLDS (122 aa)). C12, C48, C87, C163, C167, and C170 together coordinate [4Fe-4S] cluster. A Radical SAM core domain is found at 149-380 (KSPTVSGLVS…QAQLMLQQLE (232 aa)). The 65-residue stretch at 383-447 (QKLIGKVVPV…ASSLFGEVCP (65 aa)) folds into the TRAM domain.

This sequence belongs to the methylthiotransferase family. MiaB subfamily. In terms of assembly, monomer. [4Fe-4S] cluster is required as a cofactor.

It is found in the cytoplasm. The enzyme catalyses N(6)-dimethylallyladenosine(37) in tRNA + (sulfur carrier)-SH + AH2 + 2 S-adenosyl-L-methionine = 2-methylsulfanyl-N(6)-dimethylallyladenosine(37) in tRNA + (sulfur carrier)-H + 5'-deoxyadenosine + L-methionine + A + S-adenosyl-L-homocysteine + 2 H(+). In terms of biological role, catalyzes the methylthiolation of N6-(dimethylallyl)adenosine (i(6)A), leading to the formation of 2-methylthio-N6-(dimethylallyl)adenosine (ms(2)i(6)A) at position 37 in tRNAs that read codons beginning with uridine. The sequence is that of tRNA-2-methylthio-N(6)-dimethylallyladenosine synthase from Orientia tsutsugamushi (strain Boryong) (Rickettsia tsutsugamushi).